The following is a 195-amino-acid chain: Dephospho-CoA kinase (195 aa).

One can recognise a DPCK domain in the interval 4–195 (IIGLTGGIAS…EQILDALQRL (192 aa)). Residue 12-17 (ASGKST) coordinates ATP.

The protein belongs to the CoaE family.

The protein localises to the cytoplasm. The enzyme catalyses 3'-dephospho-CoA + ATP = ADP + CoA + H(+). It functions in the pathway cofactor biosynthesis; coenzyme A biosynthesis; CoA from (R)-pantothenate: step 5/5. In terms of biological role, catalyzes the phosphorylation of the 3'-hydroxyl group of dephosphocoenzyme A to form coenzyme A. The protein is Dephospho-CoA kinase of Streptococcus agalactiae serotype III (strain NEM316).